A 374-amino-acid polypeptide reads, in one-letter code: Tryptophan--tRNA ligase (374 aa).

The short motif at proline 81–histidine 89 is the 'HIGH' region element. Residues lysine 258–serine 262 carry the 'KMSKS' region motif.

It belongs to the class-I aminoacyl-tRNA synthetase family.

It is found in the cytoplasm. It carries out the reaction tRNA(Trp) + L-tryptophan + ATP = L-tryptophyl-tRNA(Trp) + AMP + diphosphate + H(+). The chain is Tryptophan--tRNA ligase from Pyrobaculum arsenaticum (strain DSM 13514 / JCM 11321 / PZ6).